We begin with the raw amino-acid sequence, 352 residues long: Putative killer cell immunoglobulin-like receptor-like protein KIR3DX1 (352 aa).

The N-terminal stretch at 1–16 (MAPKLITVLCLGFCLN) is a signal peptide. Ig-like C2-type domains follow at residues 17–112 (QKIC…NSLK) and 224–311 (PSLS…VTRC). Intrachain disulfides connect cysteine 49/cysteine 94 and cysteine 244/cysteine 295. Asparagine 78 carries N-linked (GlcNAc...) asparagine glycosylation.

As to expression, expressed in NK-cells.

Its subcellular location is the secreted. This Homo sapiens (Human) protein is Putative killer cell immunoglobulin-like receptor-like protein KIR3DX1 (KIR3DX1).